Consider the following 203-residue polypeptide: LexA repressor (203 aa).

The segment at residues 29–49 (VREIGQEVGLSSSSTVHGYLK) is a DNA-binding region (H-T-H motif). Active-site for autocatalytic cleavage activity residues include S126 and K163.

The protein belongs to the peptidase S24 family. Homodimer.

The enzyme catalyses Hydrolysis of Ala-|-Gly bond in repressor LexA.. Represses a number of genes involved in the response to DNA damage (SOS response), including recA and lexA. In the presence of single-stranded DNA, RecA interacts with LexA causing an autocatalytic cleavage which disrupts the DNA-binding part of LexA, leading to derepression of the SOS regulon and eventually DNA repair. The protein is LexA repressor of Pelotomaculum thermopropionicum (strain DSM 13744 / JCM 10971 / SI).